The following is a 151-amino-acid chain: Ribonuclease H (151 aa).

One can recognise an RNase H type-1 domain in the interval 2–143; sequence SSNVIEIYAD…ADALANKGVD (142 aa). Mg(2+) is bound by residues D11, E49, D71, and D135.

This sequence belongs to the RNase H family. Monomer. Requires Mg(2+) as cofactor.

The protein localises to the cytoplasm. It catalyses the reaction Endonucleolytic cleavage to 5'-phosphomonoester.. Its function is as follows. Endonuclease that specifically degrades the RNA of RNA-DNA hybrids. This Methylobacillus flagellatus (strain ATCC 51484 / DSM 6875 / VKM B-1610 / KT) protein is Ribonuclease H.